Reading from the N-terminus, the 344-residue chain is Nicotinate-nucleotide--dimethylbenzimidazole phosphoribosyltransferase (344 aa).

Glu310 acts as the Proton acceptor in catalysis.

It belongs to the CobT family.

It catalyses the reaction 5,6-dimethylbenzimidazole + nicotinate beta-D-ribonucleotide = alpha-ribazole 5'-phosphate + nicotinate + H(+). It functions in the pathway nucleoside biosynthesis; alpha-ribazole biosynthesis; alpha-ribazole from 5,6-dimethylbenzimidazole: step 1/2. Functionally, catalyzes the synthesis of alpha-ribazole-5'-phosphate from nicotinate mononucleotide (NAMN) and 5,6-dimethylbenzimidazole (DMB). The sequence is that of Nicotinate-nucleotide--dimethylbenzimidazole phosphoribosyltransferase from Chromobacterium violaceum (strain ATCC 12472 / DSM 30191 / JCM 1249 / CCUG 213 / NBRC 12614 / NCIMB 9131 / NCTC 9757 / MK).